Reading from the N-terminus, the 241-residue chain is Large ribosomal subunit protein eL32 (241 aa).

Acidic residues predominate over residues 1 to 16 (MADNEEDVEAEEEYTE). Disordered stretches follow at residues 1–47 (MADN…GADQ) and 68–182 (VGGL…HPSG). Residues 29–44 (ESLREAGFESVEDVRG) are compositionally biased toward basic and acidic residues. Residues 73–96 (VESETEAEVEEEGGEEAPDEDVET) are compositionally biased toward acidic residues. The segment covering 103–116 (LTEKTPDLSDEDAR) has biased composition (basic and acidic residues). The span at 133–159 (DHHKKKRVSTSWRKPRGQLSKQRRGIK) shows a compositional bias: basic residues.

It belongs to the eukaryotic ribosomal protein eL32 family. Part of the 50S ribosomal subunit. Interacts weakly with protein L15.

In terms of biological role, binds to the 23S rRNA. This Haloarcula marismortui (strain ATCC 43049 / DSM 3752 / JCM 8966 / VKM B-1809) (Halobacterium marismortui) protein is Large ribosomal subunit protein eL32 (rpl32e).